We begin with the raw amino-acid sequence, 107 residues long: Phosphoribosyl-ATP pyrophosphatase (107 aa).

Belongs to the PRA-PH family.

Its subcellular location is the cytoplasm. The enzyme catalyses 1-(5-phospho-beta-D-ribosyl)-ATP + H2O = 1-(5-phospho-beta-D-ribosyl)-5'-AMP + diphosphate + H(+). The protein operates within amino-acid biosynthesis; L-histidine biosynthesis; L-histidine from 5-phospho-alpha-D-ribose 1-diphosphate: step 2/9. This Sinorhizobium medicae (strain WSM419) (Ensifer medicae) protein is Phosphoribosyl-ATP pyrophosphatase.